The sequence spans 357 residues: UDP-N-acetylglucosamine--N-acetylmuramyl-(pentapeptide) pyrophosphoryl-undecaprenol N-acetylglucosamine transferase (357 aa).

Residues 14-16 (SGG), Asn-125, Ser-190, and Gln-290 contribute to the UDP-N-acetyl-alpha-D-glucosamine site.

Belongs to the glycosyltransferase 28 family. MurG subfamily.

Its subcellular location is the cell inner membrane. The enzyme catalyses di-trans,octa-cis-undecaprenyl diphospho-N-acetyl-alpha-D-muramoyl-L-alanyl-D-glutamyl-meso-2,6-diaminopimeloyl-D-alanyl-D-alanine + UDP-N-acetyl-alpha-D-glucosamine = di-trans,octa-cis-undecaprenyl diphospho-[N-acetyl-alpha-D-glucosaminyl-(1-&gt;4)]-N-acetyl-alpha-D-muramoyl-L-alanyl-D-glutamyl-meso-2,6-diaminopimeloyl-D-alanyl-D-alanine + UDP + H(+). It functions in the pathway cell wall biogenesis; peptidoglycan biosynthesis. Cell wall formation. Catalyzes the transfer of a GlcNAc subunit on undecaprenyl-pyrophosphoryl-MurNAc-pentapeptide (lipid intermediate I) to form undecaprenyl-pyrophosphoryl-MurNAc-(pentapeptide)GlcNAc (lipid intermediate II). In Chlamydia felis (strain Fe/C-56) (Chlamydophila felis), this protein is UDP-N-acetylglucosamine--N-acetylmuramyl-(pentapeptide) pyrophosphoryl-undecaprenol N-acetylglucosamine transferase.